We begin with the raw amino-acid sequence, 121 residues long: Basic phospholipase A2 BmjeTX-I (121 aa).

7 disulfides stabilise this stretch: C26/C114, C28/C45, C44/C95, C50/C121, C51/C88, C58/C82, and C76/C86. Y27, G29, and G31 together coordinate Ca(2+). The active site involves H48. A Ca(2+)-binding site is contributed by D49. Residue D89 is part of the active site.

Requires Ca(2+) as cofactor. Expressed by the venom gland.

The protein resides in the secreted. The catalysed reaction is a 1,2-diacyl-sn-glycero-3-phosphocholine + H2O = a 1-acyl-sn-glycero-3-phosphocholine + a fatty acid + H(+). Its function is as follows. Snake venom phospholipase A2 (PLA2) that induces a slight blockade of neuromuscular contraction in an indirectly stimulated chick biventer cervicis nerve-muscle preparation. Does not inhibit contraction of chick biventer cervicic nerve-muscle preparation in response to treatment with acetylcholine or KCl. The neuromuscular blockade is mediated by inhibitory action at the presynaptic motor nerve endings. Lyses skeletal myoblasts and myotubes in vitro, and intramuscular injection causes local muscle necrosis. Induces edema in the mouse foot pad. Induces a transient increase of IL-6 levels. PLA2 catalyzes the calcium-dependent hydrolysis of the 2-acyl groups in 3-sn-phosphoglycerides. This Bothrops marajoensis (Marajo lancehead) protein is Basic phospholipase A2 BmjeTX-I.